A 487-amino-acid chain; its full sequence is Cysteine--tRNA ligase (487 aa).

Cysteine 29 is a Zn(2+) binding site. The 'HIGH' region signature appears at 31–41 (VTVYDVNHVGH). 3 residues coordinate Zn(2+): cysteine 209, histidine 234, and glutamate 238. A 'KMSKS' region motif is present at residues 266-270 (KMSKS). Lysine 269 contacts ATP.

Belongs to the class-I aminoacyl-tRNA synthetase family. In terms of assembly, monomer. Requires Zn(2+) as cofactor.

The protein resides in the cytoplasm. The enzyme catalyses tRNA(Cys) + L-cysteine + ATP = L-cysteinyl-tRNA(Cys) + AMP + diphosphate. This Persephonella marina (strain DSM 14350 / EX-H1) protein is Cysteine--tRNA ligase.